Here is a 340-residue protein sequence, read N- to C-terminus: Fructose-1,6-bisphosphatase class 1 (340 aa).

4 residues coordinate Mg(2+): E107, D126, L128, and D129. N215 serves as a coordination point for substrate. E287 lines the Mg(2+) pocket.

The protein belongs to the FBPase class 1 family. In terms of assembly, homotetramer. It depends on Mg(2+) as a cofactor.

It localises to the cytoplasm. It carries out the reaction beta-D-fructose 1,6-bisphosphate + H2O = beta-D-fructose 6-phosphate + phosphate. It participates in carbohydrate biosynthesis; gluconeogenesis. The sequence is that of Fructose-1,6-bisphosphatase class 1 from Brucella canis (strain ATCC 23365 / NCTC 10854 / RM-666).